A 177-amino-acid polypeptide reads, in one-letter code: Parathyroid hormone-related protein (177 aa).

A signal peptide spans 1 to 24; sequence MLRRLVQQWSVAVFLLSYSVPSCG. Residues 25 to 34 constitute a propeptide that is removed on maturation; that stretch reads RSVEGPGRRL. The important for receptor binding stretch occupies residues 57 to 68; sequence RFFLHHLIAEIH. The disordered stretch occupies residues 74–177; that stretch reads ATSEVSPNSK…PEPELDSRRH (104 aa). The span at 76 to 90 shows a compositional bias: polar residues; sequence SEVSPNSKPAANTKN. The short motif at 108–129 is the Nuclear localization signal element; sequence TNKVEPYKEQPLKTPGKKKKGK. Residues 109-118 are compositionally biased toward basic and acidic residues; it reads NKVEPYKEQP. The span at 122–132 shows a compositional bias: basic residues; it reads PGKKKKGKPGK.

It belongs to the parathyroid hormone family. As to quaternary structure, PTHrP interacts with PTH1R (via N-terminal extracellular domain). There are several secretory forms, including osteostatin, arising from endoproteolytic cleavage of the initial translation product. Each of these secretory forms is believed to have one or more of its own receptors that mediates the normal paracrine, autocrine and endocrine actions.

The protein resides in the secreted. It is found in the cytoplasm. The protein localises to the nucleus. Functionally, neuroendocrine peptide which is a critical regulator of cellular and organ growth, development, migration, differentiation and survival and of epithelial calcium ion transport. Acts by binding to its receptor, PTH1R, activating G protein-coupled receptor signaling. Regulates endochondral bone development and epithelial-mesenchymal interactions during the formation of the mammary glands and teeth. Required for skeletal homeostasis. Promotes mammary mesenchyme differentiation and bud outgrowth by modulating mesenchymal cell responsiveness to BMPs. Up-regulates BMPR1A expression in the mammary mesenchyme and this increases the sensitivity of these cells to BMPs and allows them to respond to BMP4 in a paracrine and/or autocrine fashion. BMP4 signaling in the mesenchyme, in turn, triggers epithelial outgrowth and augments MSX2 expression, which causes the mammary mesenchyme to inhibit hair follicle formation within the nipple sheath. Potent inhibitor of osteoclastic bone resorption. In Oryctolagus cuniculus (Rabbit), this protein is Parathyroid hormone-related protein (PTHLH).